The chain runs to 420 residues: MVSRQEQFEQVQAVKKSINTASEEVKNQALLAMADHLVAATEEILAANALDMAAAKGKISDVMLDRLYLDADRIEAMARGIREVVALPDPIGEVLETSQLENGLVITKKRVAMGVIGIIYESRPNVTSDAAALTLKSGNAVVLRSGKDAYQTTHAIVTALKKGLETTTIHPNVIQLVEDTSRESSYAMMKAKGYLDLLIPRGGAGLINAVVENAIVPVIETGTGIVHVYVDKDADEDKALSIINNAKTSRPSVCNAMEVLLVHENKAASILPRLDQMLVAERKEAGLEPIQFRLDSKASQFVSGQAAETQDFDTEFLDYVLAVKVVSSLEEAVAHIESHSTHHSDAIVTENAEAAAYFTDQVDSAAVYVNASTRFTDGGQFGLGCEMGISTQKLHARGPMGLKELTSYKYVVAGDGQIRE.

The protein belongs to the gamma-glutamyl phosphate reductase family.

It localises to the cytoplasm. The catalysed reaction is L-glutamate 5-semialdehyde + phosphate + NADP(+) = L-glutamyl 5-phosphate + NADPH + H(+). It functions in the pathway amino-acid biosynthesis; L-proline biosynthesis; L-glutamate 5-semialdehyde from L-glutamate: step 2/2. In terms of biological role, catalyzes the NADPH-dependent reduction of L-glutamate 5-phosphate into L-glutamate 5-semialdehyde and phosphate. The product spontaneously undergoes cyclization to form 1-pyrroline-5-carboxylate. This chain is Gamma-glutamyl phosphate reductase, found in Streptococcus pneumoniae serotype 2 (strain D39 / NCTC 7466).